A 278-amino-acid chain; its full sequence is Neuronal membrane glycoprotein M6-a (278 aa).

Residue methionine 1 is modified to N-acetylmethionine. At 1–22 (MEENMEEGQTQKGCFECCIKCL) the chain is on the cytoplasmic side. A helical membrane pass occupies residues 23-43 (GGIPYASLIATILLYAGVALF). The Extracellular segment spans residues 44-84 (CGCGHEALSGTVNILQTYFEMARTAGDTLDVFTMIDIFKYV). The chain crosses the membrane as a helical span at residues 85 to 105 (IYGIAAAFFVYGILLMVEGFF). Residues 106–127 (TTGAIKDLYGDFKITTCGRCVS) are Cytoplasmic-facing. Residues 128–148 (AWFIMLTYLFMLAWLGVTAFT) traverse the membrane as a helical segment. The Extracellular portion of the chain corresponds to 149 to 213 (SLPVYMYFNV…STELNMTFHL (65 aa)). N-linked (GlcNAc...) asparagine glycosylation is present at asparagine 164. An intrachain disulfide couples cysteine 174 to cysteine 192. Asparagine 208 carries an N-linked (GlcNAc...) asparagine glycan. The chain crosses the membrane as a helical span at residues 214–234 (FIVALAGAGAAVIAMVHYLMV). Residues 235–278 (LSANWAYVKDACRMQKYEDIKSKEEQELHDIHSTRSKERLNAYT) are Cytoplasmic-facing. Residue serine 256 is modified to Phosphoserine. Threonine 278 carries the phosphothreonine modification.

This sequence belongs to the myelin proteolipid protein family. As to quaternary structure, interacts with OPRM1. Interacts with palmitoyltransferase ZDHHC17/HIP14; the interaction leads to palmitoylation of GPM6A. N-glycosylated. Post-translationally, palmitoylated by ZDHHC17/HIP14. In terms of tissue distribution, expressed in hippocampus (at protein level). Isoform 1 is the predominant isoform expressed in brain, specifically in hippocampus. Isoform 2 is expressed at low levels in brain and kidney.

The protein resides in the cell membrane. The protein localises to the cell projection. Its subcellular location is the axon. It is found in the growth cone. It localises to the dendritic spine. The protein resides in the filopodium. The protein localises to the neuron projection. In terms of biological role, involved in neuronal differentiation, including differentiation and migration of neuronal stem cells. Plays a role in neuronal plasticity and is involved in neurite and filopodia outgrowth, filopodia motility and probably synapse formation. Gpm6a-induced filopodia formation involves mitogen-activated protein kinase (MAPK) and Src signaling pathways. May be involved in neuronal NGF-dependent Ca(2+) influx. May be involved in regulation of endocytosis and intracellular trafficking of G-protein-coupled receptors (GPCRs); enhances internalization and recycling of mu-type opioid receptor. The polypeptide is Neuronal membrane glycoprotein M6-a (Gpm6a) (Rattus norvegicus (Rat)).